Reading from the N-terminus, the 100-residue chain is Integration host factor subunit alpha (100 aa).

Residues Gly-50–Glu-70 are disordered.

Belongs to the bacterial histone-like protein family. In terms of assembly, heterodimer of an alpha and a beta chain.

Its function is as follows. This protein is one of the two subunits of integration host factor, a specific DNA-binding protein that functions in genetic recombination as well as in transcriptional and translational control. The sequence is that of Integration host factor subunit alpha from Chromobacterium violaceum (strain ATCC 12472 / DSM 30191 / JCM 1249 / CCUG 213 / NBRC 12614 / NCIMB 9131 / NCTC 9757 / MK).